Here is a 100-residue protein sequence, read N- to C-terminus: Succinate dehydrogenase assembly factor 4, mitochondrial (100 aa).

The N-terminal 31 residues, 1–31 (MFNRNLRAVILKNYNKALTRCLHDAGNLKRP), are a transit peptide targeting the mitochondrion. The disordered stretch occupies residues 24–100 (DAGNLKRPTP…YSYEGRVTDF (77 aa)). 2 stretches are compositionally biased toward basic and acidic residues: residues 36 to 68 (LPKE…KDFE) and 85 to 100 (PTVH…VTDF).

It belongs to the SDHAF4 family. As to quaternary structure, interacts with sdh1 in its FAD-bound form.

It localises to the mitochondrion matrix. Plays an essential role in the assembly of succinate dehydrogenase (SDH), an enzyme complex (also referred to as respiratory complex II) that is a component of both the tricarboxylic acid (TCA) cycle and the mitochondrial electron transport chain, and which couples the oxidation of succinate to fumarate with the reduction of ubiquinone (coenzyme Q) to ubiquinol. Binds to the flavoprotein subunit sdh1 in its FAD-bound form, blocking the generation of excess reactive oxygen species (ROS) and facilitating its assembly with the iron-sulfur protein subunit sdh2 into the SDH catalytic dimer. The chain is Succinate dehydrogenase assembly factor 4, mitochondrial from Schizosaccharomyces pombe (strain 972 / ATCC 24843) (Fission yeast).